Reading from the N-terminus, the 299-residue chain is Putative ammonium transporter 4 member 1 (299 aa).

The next 5 helical transmembrane spans lie at 16–36, 59–79, 104–124, 158–178, and 218–238; these read AWPL…LVIL, VLLT…GFNG, LLVW…ISAV, VLHT…LLLL, and AGIA…CLAV.

Belongs to the ammonia transporter channel (TC 1.A.11.2) family.

It is found in the membrane. The protein is Putative ammonium transporter 4 member 1 (AMT4-1) of Oryza sativa subsp. japonica (Rice).